A 221-amino-acid polypeptide reads, in one-letter code: GTP-binding nuclear protein Ran-B1 (221 aa).

The Small GTPase Ran-type domain maps to 10–174 (DYPSFKLVIV…LYLARKLAGD (165 aa)). GTP is bound at residue 21–28 (DGGTGKTT). The switch-I stretch occupies residues 40-48 (KKYEPTIGV). Residues Gly71, 125-128 (NKVD), and 153-155 (SAK) contribute to the GTP site. The interval 71–87 (GQEKFGGLRDGYYIHGQ) is switch-II.

This sequence belongs to the small GTPase superfamily. Ran family. As to quaternary structure, found in a nuclear export complex with RanGTP, exportin and pre-miRNA.

It is found in the nucleus. Its function is as follows. GTP-binding protein involved in nucleocytoplasmic transport. Required for the import of protein into the nucleus and also for RNA export. Involved in chromatin condensation and control of cell cycle. The chain is GTP-binding nuclear protein Ran-B1 (RAN-B1) from Nicotiana tabacum (Common tobacco).